The sequence spans 901 residues: Quinate repressor protein (901 aa).

Residues 1–88 form a sufficient for repression region; the sequence is MSILVRPPKR…DSLQTRRKFP (88 aa). Disordered stretches follow at residues 26-59 and 878-901; these read LRDF…DGSR and EEQG…GQPM. Polar residues predominate over residues 31 to 43; that stretch reads QGNSASTPINTSA.

This sequence in the N-terminal section; belongs to the shikimate kinase family. The protein in the 2nd section; belongs to the type-I 3-dehydroquinase family. It in the C-terminal section; belongs to the shikimate dehydrogenase family. As to quaternary structure, interacts with qutA; transcriptional activator of the quinate utilization pathway genes.

In terms of biological role, multi-domain repressor protein that negatively regulates transcription of the quinate utilization pathway genes. May mediate its repressor activity by binding directly to the qutA activator protein. This chain is Quinate repressor protein (qutR), found in Emericella nidulans (strain FGSC A4 / ATCC 38163 / CBS 112.46 / NRRL 194 / M139) (Aspergillus nidulans).